Reading from the N-terminus, the 156-residue chain is Ribosomal RNA large subunit methyltransferase H (156 aa).

S-adenosyl-L-methionine contacts are provided by residues L73, G104, and 123 to 128; that span reads LSALTL.

Belongs to the RNA methyltransferase RlmH family. Homodimer.

It localises to the cytoplasm. It carries out the reaction pseudouridine(1915) in 23S rRNA + S-adenosyl-L-methionine = N(3)-methylpseudouridine(1915) in 23S rRNA + S-adenosyl-L-homocysteine + H(+). In terms of biological role, specifically methylates the pseudouridine at position 1915 (m3Psi1915) in 23S rRNA. The sequence is that of Ribosomal RNA large subunit methyltransferase H from Vibrio parahaemolyticus serotype O3:K6 (strain RIMD 2210633).